Consider the following 188-residue polypeptide: Photosystem I assembly protein Ycf4 (188 aa).

The next 2 helical transmembrane spans lie at 26 to 46 (IWWG…GLSS) and 70 to 90 (LLFY…TIIL).

The protein belongs to the Ycf4 family.

The protein localises to the cellular thylakoid membrane. Seems to be required for the assembly of the photosystem I complex. The sequence is that of Photosystem I assembly protein Ycf4 from Rippkaea orientalis (strain PCC 8801 / RF-1) (Cyanothece sp. (strain PCC 8801)).